The primary structure comprises 416 residues: Histidine--tRNA ligase (416 aa).

This sequence belongs to the class-II aminoacyl-tRNA synthetase family. Homodimer.

Its subcellular location is the cytoplasm. It carries out the reaction tRNA(His) + L-histidine + ATP = L-histidyl-tRNA(His) + AMP + diphosphate + H(+). The chain is Histidine--tRNA ligase from Clostridium kluyveri (strain NBRC 12016).